The sequence spans 1288 residues: (E3-independent) E2 ubiquitin-conjugating enzyme UBE2O (1288 aa).

Low complexity-rich tracts occupy residues 1-26 and 34-47; these read MADPAAPAPAQAQAAAAPTPAAAPAA and ATDSASGPSSDSGP. 2 disordered regions span residues 1 to 51 and 80 to 109; these read MADP…EAGS and EDSDSEGDDDGRGSSGCSEAGGAGHEEGRA. Phosphoserine occurs at positions 45, 82, 84, and 394. Disordered stretches follow at residues 396–529 and 711–743; these read TPDT…KNKV and ESDYDSVEGSSSGASSDEWEDDSDSWETDNGLV. Residues 401–418 show a composition bias toward basic and acidic residues; that stretch reads CPRDHSMEDPDKKGEARA. Ser436 carries the post-translational modification Phosphoserine. Residues 440 to 450 show a composition bias toward acidic residues; it reads MQDEGSEELQE. The span at 462 to 472 shows a compositional bias: basic and acidic residues; that stretch reads EGGDDGLHSAE. Over residues 473-485 the composition is skewed to acidic residues; the sequence is QDADDEAADDTDD. 2 positions are modified to phosphothreonine: Thr483 and Thr486. Positions 486–502 are enriched in low complexity; the sequence is TSSVTSSASSTTSSQSG. Phosphoserine is present on Ser510. The segment covering 517–528 has biased composition (basic residues); the sequence is NLKRKHKRKKNK. Positions 717–726 are enriched in low complexity; the sequence is VEGSSSGASS. The segment covering 727–737 has biased composition (acidic residues); the sequence is DEWEDDSDSWE. Residues 809 to 879 are a coiled coil; that stretch reads RELKEAIKIL…IAEEEKMEAV (71 aa). Ser833 is subject to Phosphoserine. Thr835 is subject to Phosphothreonine. Ser836 carries the post-translational modification Phosphoserine. Residues 872–890 show a composition bias toward basic and acidic residues; sequence EEEKMEAVPDTERKEEKPE. The interval 872–899 is disordered; sequence EEEKMEAVPDTERKEEKPEVQSPVKAEW. Ser893 is modified (phosphoserine). Positions 950–1110 constitute a UBC core domain; it reads KFFSTVRKEM…ALIRVVQSMT (161 aa). The Glycyl thioester intermediate role is filled by Cys1037. The disordered stretch occupies residues 1158-1247; the sequence is GALKDSSSLE…RSFLPEKSGY (90 aa).

Belongs to the ubiquitin-conjugating enzyme family. In terms of assembly, interacts with CPNE1 (via VWFA domain) and CPNE4 (via VWFA domain). Interacts with UBR2. Post-translationally, phosphorylated. Phosphorylation affects subcellular location. Ubiquitinated: autoubiquitinates, possibly affecting its subcellular location. In terms of tissue distribution, highly expressed in reticulocytes.

It is found in the cytoplasm. The protein localises to the nucleus. The enzyme catalyses S-ubiquitinyl-[E1 ubiquitin-activating enzyme]-L-cysteine + [acceptor protein]-L-lysine = [E1 ubiquitin-activating enzyme]-L-cysteine + N(6)-monoubiquitinyl-[acceptor protein]-L-lysine.. It functions in the pathway protein modification; protein ubiquitination. Its activity is regulated as follows. Inhibited by inorganic arsenite such as phenylarsenoxides. In terms of biological role, E2/E3 hybrid ubiquitin-protein ligase that displays both E2 and E3 ligase activities and mediates monoubiquitination of target proteins. Negatively regulates TRAF6-mediated NF-kappa-B activation independently of its E2 activity. Acts as a positive regulator of BMP7 signaling by mediating monoubiquitination of SMAD6, thereby regulating adipogenesis. Mediates monoubiquitination at different sites of the nuclear localization signal (NLS) of BAP1, leading to cytoplasmic retention of BAP1. Also able to monoubiquitinate the NLS of other chromatin-associated proteins, such as INO80 and CXXC1, affecting their subcellular location. Acts as a regulator of retrograde transport by assisting the TRIM27:MAGEL2 E3 ubiquitin ligase complex to mediate 'Lys-63'-linked ubiquitination of WASHC1, leading to promote endosomal F-actin assembly. This Mus musculus (Mouse) protein is (E3-independent) E2 ubiquitin-conjugating enzyme UBE2O (Ube2o).